We begin with the raw amino-acid sequence, 228 residues long: Phosphatidylserine decarboxylase proenzyme (228 aa).

The active-site Schiff-base intermediate with substrate; via pyruvic acid is the serine 197. Serine 197 carries the pyruvic acid (Ser); by autocatalysis modification.

The protein belongs to the phosphatidylserine decarboxylase family. PSD-A subfamily. In terms of assembly, heterodimer of a large membrane-associated beta subunit and a small pyruvoyl-containing alpha subunit. Requires pyruvate as cofactor. In terms of processing, is synthesized initially as an inactive proenzyme. Formation of the active enzyme involves a self-maturation process in which the active site pyruvoyl group is generated from an internal serine residue via an autocatalytic post-translational modification. Two non-identical subunits are generated from the proenzyme in this reaction, and the pyruvate is formed at the N-terminus of the alpha chain, which is derived from the carboxyl end of the proenzyme. The post-translation cleavage follows an unusual pathway, termed non-hydrolytic serinolysis, in which the side chain hydroxyl group of the serine supplies its oxygen atom to form the C-terminus of the beta chain, while the remainder of the serine residue undergoes an oxidative deamination to produce ammonia and the pyruvoyl prosthetic group on the alpha chain.

It localises to the cell membrane. It carries out the reaction a 1,2-diacyl-sn-glycero-3-phospho-L-serine + H(+) = a 1,2-diacyl-sn-glycero-3-phosphoethanolamine + CO2. It functions in the pathway phospholipid metabolism; phosphatidylethanolamine biosynthesis; phosphatidylethanolamine from CDP-diacylglycerol: step 2/2. Its function is as follows. Catalyzes the formation of phosphatidylethanolamine (PtdEtn) from phosphatidylserine (PtdSer). This is Phosphatidylserine decarboxylase proenzyme from Phocaeicola vulgatus (strain ATCC 8482 / DSM 1447 / JCM 5826 / CCUG 4940 / NBRC 14291 / NCTC 11154) (Bacteroides vulgatus).